The sequence spans 99 residues: Cell cycle protein GpsB (99 aa).

The stretch at 34 to 71 forms a coiled coil; sequence LDMIIKDYETFHQEIEELQQENLQLKKQLEEASKKQPV.

It belongs to the GpsB family. In terms of assembly, forms polymers through the coiled coil domains. Interacts with PBP1, MreC and EzrA.

It is found in the cytoplasm. Its function is as follows. Divisome component that associates with the complex late in its assembly, after the Z-ring is formed, and is dependent on DivIC and PBP2B for its recruitment to the divisome. Together with EzrA, is a key component of the system that regulates PBP1 localization during cell cycle progression. Its main role could be the removal of PBP1 from the cell pole after pole maturation is completed. Also contributes to the recruitment of PBP1 to the division complex. Not essential for septum formation. This Bacillus velezensis (strain DSM 23117 / BGSC 10A6 / LMG 26770 / FZB42) (Bacillus amyloliquefaciens subsp. plantarum) protein is Cell cycle protein GpsB.